Reading from the N-terminus, the 201-residue chain is Cytochrome c oxidase assembly protein CtaG (201 aa).

Over 1-13 the chain is Cytoplasmic; it reads MTDQGENEKKQRR. A helical; Signal-anchor for type II membrane protein transmembrane segment spans residues 14–36; sequence SNATIAVACLSFFVCMIGAAYAS. The Periplasmic segment spans residues 37–201; it reads VPLYRIFCQV…KAVGSTRNGG (165 aa).

This sequence belongs to the COX11/CtaG family.

The protein resides in the cell inner membrane. Functionally, exerts its effect at some terminal stage of cytochrome c oxidase synthesis, probably by being involved in the insertion of the copper B into subunit I. This Brucella suis (strain ATCC 23445 / NCTC 10510) protein is Cytochrome c oxidase assembly protein CtaG.